A 359-amino-acid chain; its full sequence is Fructose-like permease IIC component 2 (359 aa).

One can recognise a PTS EIIC type-2 domain in the interval 11-344 (TRQHLMTGVS…KSLARKNGSS (334 aa)). A run of 9 helical transmembrane segments spans residues 19-39 (VSHM…SVML), 60-80 (IGVA…GYSI), 99-119 (FGAG…VVHY), 135-155 (IFII…WGLG), 176-196 (SIVM…GGPV), 216-236 (VAIA…ATLI), 251-271 (AALV…AAAD), 290-310 (AALV…LPVV), and 314-334 (LGYI…VNVL).

It localises to the cell inner membrane. Functionally, the phosphoenolpyruvate-dependent sugar phosphotransferase system (PTS), a major carbohydrate active -transport system, catalyzes the phosphorylation of incoming sugar substrates concomitant with their translocation across the cell membrane. The protein is Fructose-like permease IIC component 2 (frwC) of Escherichia coli (strain K12).